The following is a 692-amino-acid chain: Elongation factor G (692 aa).

The region spanning 8-283 (DHVRNIGIMA…AVVDYFPSPS (276 aa)) is the tr-type G domain. Residues 17 to 24 (AHIDAGKT), 81 to 85 (DTPGH), and 135 to 138 (NKMD) each bind GTP.

Belongs to the TRAFAC class translation factor GTPase superfamily. Classic translation factor GTPase family. EF-G/EF-2 subfamily.

The protein localises to the cytoplasm. In terms of biological role, catalyzes the GTP-dependent ribosomal translocation step during translation elongation. During this step, the ribosome changes from the pre-translocational (PRE) to the post-translocational (POST) state as the newly formed A-site-bound peptidyl-tRNA and P-site-bound deacylated tRNA move to the P and E sites, respectively. Catalyzes the coordinated movement of the two tRNA molecules, the mRNA and conformational changes in the ribosome. The polypeptide is Elongation factor G (Magnetococcus marinus (strain ATCC BAA-1437 / JCM 17883 / MC-1)).